A 513-amino-acid chain; its full sequence is Light-independent protochlorophyllide reductase subunit B (513 aa).

Aspartate 36 lines the [4Fe-4S] cluster pocket. The active-site Proton donor is aspartate 299. Glycine 434 to methionine 435 serves as a coordination point for substrate.

Belongs to the ChlB/BchB/BchZ family. Protochlorophyllide reductase is composed of three subunits; ChlL, ChlN and ChlB. Forms a heterotetramer of two ChlB and two ChlN subunits. [4Fe-4S] cluster serves as cofactor.

Its subcellular location is the plastid. The protein resides in the chloroplast. The catalysed reaction is chlorophyllide a + oxidized 2[4Fe-4S]-[ferredoxin] + 2 ADP + 2 phosphate = protochlorophyllide a + reduced 2[4Fe-4S]-[ferredoxin] + 2 ATP + 2 H2O. Its pathway is porphyrin-containing compound metabolism; chlorophyll biosynthesis (light-independent). Its function is as follows. Component of the dark-operative protochlorophyllide reductase (DPOR) that uses Mg-ATP and reduced ferredoxin to reduce ring D of protochlorophyllide (Pchlide) to form chlorophyllide a (Chlide). This reaction is light-independent. The NB-protein (ChlN-ChlB) is the catalytic component of the complex. In Zygnema circumcarinatum (Green alga), this protein is Light-independent protochlorophyllide reductase subunit B.